A 113-amino-acid chain; its full sequence is U11-theraphotoxin-Hhn1f (113 aa).

A signal peptide spans 1 to 21 (MNTVRVTFLLVFVLAVSLGQA). Positions 22 to 74 (DKDENRMEMQEKTEQGKSYLDFAENLLLQKLEELEAKLLEEDSKESRNSRQKR) are excised as a propeptide. Residues 61 to 82 (EEDSKESRNSRQKRCIGEGVPC) are disordered. Cystine bridges form between Cys-75/Cys-90, Cys-82/Cys-95, and Cys-89/Cys-110.

The protein belongs to the neurotoxin 14 (magi-1) family. 01 (HNTX-16) subfamily. Expressed by the venom gland.

Its subcellular location is the secreted. In terms of biological role, probable ion channel inhibitor. This chain is U11-theraphotoxin-Hhn1f, found in Cyriopagopus hainanus (Chinese bird spider).